A 647-amino-acid chain; its full sequence is Sodium/nucleoside cotransporter 1 (647 aa).

Topologically, residues 1–79 (MEDNTPRQRD…VRRFCREHTQ (79 aa)) are cytoplasmic. Residues 34 to 58 (EGRAPGSDSSPAEVGGGWSKAGPEH) form a disordered region. A helical membrane pass occupies residues 80 to 103 (LFRWICTGLLCTAFAAFLLIACLL). Residues 104-108 (DFQRA) lie on the Extracellular side of the membrane. A helical transmembrane segment spans residues 109 to 127 (LALFVLFCVVLFFLAHSLL). Residues 128 to 146 (KRLLGPKLLRCVKPLRHPC) lie on the Cytoplasmic side of the membrane. Residues 147–166 (LNLWFKRGLALAAFLGLVLW) traverse the membrane as a helical segment. At 167–177 (LVLDTAQRPEQ) the chain is on the extracellular side. A helical membrane pass occupies residues 178–194 (LVSFGGICVFILLLFAG). Over 195 to 200 (SKHHRA) the chain is Cytoplasmic. Residues 201 to 221 (VSWRAVSWGLGLQFALGLFVI) form a helical membrane-spanning segment. Over 222–260 (RTEPGFIAFQWLGDQIQIFLSYTEAGSSFVFGEALVKDV) the chain is Extracellular. A helical membrane pass occupies residues 261–282 (FAFQVLPIIVFFSCAMSVLYYV). The Cytoplasmic portion of the chain corresponds to 283 to 293 (GLMQWVILKIS). Residues 294–317 (WLMQATMGTTATETLSVAGNIFVS) form a helical membrane-spanning segment. Residues 318 to 336 (QTEAPLLIRPYLADMTLSE) lie on the Extracellular side of the membrane. A helical membrane pass occupies residues 337 to 359 (IHVVMTGGYATIAGSLLGAYISF). Over 360-365 (GIDAAS) the chain is Cytoplasmic. Residues 366-385 (LIAASVMAAPCALALSKLVY) traverse the membrane as a helical segment. Residues 386–422 (PEVEESKFKREEGVKLTYGDAQNLLEAASSGAAMSVR) lie on the Extracellular side of the membrane. A helical transmembrane segment spans residues 423-445 (VVTNIAANLIAFLAVLAFINAAL). At 446 to 456 (SWLGDMVDVQG) the chain is on the cytoplasmic side. The chain crosses the membrane as a helical span at residues 457 to 478 (LSFQLICSYVLRPVAFLMGVAW). Over 479–533 (EDCPVVAELLGMKLFLNEFVAYQELSGYKQRRLAGAEEWVGSRKQWISVRAEILT) the chain is Extracellular. The chain crosses the membrane as a helical span at residues 534-557 (TYALCGFANFSSIGIMLGGLTSMV). Residues 558–568 (PQRKGDFSQIV) are Cytoplasmic-facing. Residues 569–591 (LRALCTGACVSLVNACVAGILYV) form a helical membrane-spanning segment. Over 592–647 (PRGAEVDCVSFLNTTLSSSSFEVYQCCRQFFQSTSLEFSPEALDNCCRFYNHTICV) the chain is Extracellular. Asn604 and Asn642 each carry an N-linked (GlcNAc...) asparagine glycan.

This sequence belongs to the concentrative nucleoside transporter (CNT) (TC 2.A.41) family. In terms of processing, N-glycosylated. N-glycosylation is required for localization to the plasma membrane and the transporter activity.

It is found in the cell membrane. The protein localises to the apical cell membrane. The catalysed reaction is uridine(out) + Na(+)(out) = uridine(in) + Na(+)(in). It catalyses the reaction thymidine(out) + Na(+)(out) = thymidine(in) + Na(+)(in). It carries out the reaction cytidine(out) + Na(+)(out) = cytidine(in) + Na(+)(in). The enzyme catalyses adenosine(out) + Na(+)(out) = adenosine(in) + Na(+)(in). Its activity is regulated as follows. Due to its high apparent affinity but slow transport, adenosine could act as a negative regulator of pyrimidine transport under some conditions. In terms of biological role, sodium and pyrimidine nucleoside symporter of the plasma membrane that imports uridine, thymidine and cytidine into cells by coupling their transport to the transmembrane sodium electrochemical gradient. Also transports adenosine, an atypical substrate transported with high apparent affinity, but low maximum velocity. Therefore, exhibits the transport characteristics of the nucleoside transport system cit or N2 subtype (N2/cit). Involved in renal nucleoside (re)absorption. In Sus scrofa (Pig), this protein is Sodium/nucleoside cotransporter 1 (SLC28A1).